A 486-amino-acid chain; its full sequence is Membrane-bound lytic murein transglycosylase F (486 aa).

The first 21 residues, 1–21 (MKRLKINYILIGVVTLLLALA), serve as a signal peptide directing secretion. Residues 22–268 (LWPNITWRGG…RLEEKYLGHV (247 aa)) form a non-LT domain region. Residues 269–486 (GSFDYVDTKT…AVTPELALNF (218 aa)) are LT domain. Glu-313 is an active-site residue.

The protein in the N-terminal section; belongs to the bacterial solute-binding protein 3 family. This sequence in the C-terminal section; belongs to the transglycosylase Slt family.

Its subcellular location is the cell outer membrane. The enzyme catalyses Exolytic cleavage of the (1-&gt;4)-beta-glycosidic linkage between N-acetylmuramic acid (MurNAc) and N-acetylglucosamine (GlcNAc) residues in peptidoglycan, from either the reducing or the non-reducing ends of the peptidoglycan chains, with concomitant formation of a 1,6-anhydrobond in the MurNAc residue.. Murein-degrading enzyme that degrades murein glycan strands and insoluble, high-molecular weight murein sacculi, with the concomitant formation of a 1,6-anhydromuramoyl product. Lytic transglycosylases (LTs) play an integral role in the metabolism of the peptidoglycan (PG) sacculus. Their lytic action creates space within the PG sacculus to allow for its expansion as well as for the insertion of various structures such as secretion systems and flagella. The sequence is that of Membrane-bound lytic murein transglycosylase F from Serratia proteamaculans (strain 568).